The following is a 102-amino-acid chain: UPF0045 protein Mb1933 (102 aa).

This sequence belongs to the UPF0045 family.

This chain is UPF0045 protein Mb1933, found in Mycobacterium bovis (strain ATCC BAA-935 / AF2122/97).